Consider the following 148-residue polypeptide: Cuticle protein 8 (148 aa).

Repeat copies occupy residues 16–19 (AAPA), A22, 28–31 (AAPV), 37–40 (AAPA), and 44–47 (AAPV). Residues 58–128 (YPKYEFNYGV…RTPGTHPVAV (71 aa)) enclose the Chitin-binding type R&amp;R domain.

In terms of biological role, component of the cuticle of migratory locust which contains more than 100 different structural proteins. The sequence is that of Cuticle protein 8 from Locusta migratoria (Migratory locust).